The primary structure comprises 102 residues: Small ribosomal subunit protein uS10 (102 aa).

It belongs to the universal ribosomal protein uS10 family. As to quaternary structure, part of the 30S ribosomal subunit.

Involved in the binding of tRNA to the ribosomes. This chain is Small ribosomal subunit protein uS10, found in Halalkalibacterium halodurans (strain ATCC BAA-125 / DSM 18197 / FERM 7344 / JCM 9153 / C-125) (Bacillus halodurans).